A 177-amino-acid chain; its full sequence is MSWMGHHFSRWCKDISVLSSHLPLFSPMPSEDEHLISNLRSHVPARVVVKQPIRGAIGRTTVAAIVQTGGDWSTGLFSVCRDRKICFWGLLCPMCLECDIARHYGECLCWPLLPGSTFALRIGTRERHRIQGTLCEDCVVVHCCWPFSICQVARELKMRTSQLYEICEVPELKNTLV.

Belongs to the cornifelin family.

The polypeptide is PLAC8-like protein 1 (Plac8l1) (Mus musculus (Mouse)).